The primary structure comprises 663 residues: DNA topoisomerase 4 subunit B (663 aa).

ATP-binding positions include tyrosine 7, asparagine 47, aspartate 74, 114 to 120 (GLHGVGA), and lysine 341. The segment at 386–416 (REAARKAREDARSGKKNKRKDTLLSGKLTPA) is disordered. A compositionally biased stretch (basic and acidic residues) spans 387–398 (EAARKAREDARS). The region spanning 424-538 (NELYLVEGDS…AGRVFIALPP (115 aa)) is the Toprim domain. Mg(2+) is bound by residues glutamate 430, aspartate 503, and aspartate 505.

The protein belongs to the type II topoisomerase family. ParE type 2 subfamily. In terms of assembly, heterotetramer composed of ParC and ParE. Mg(2+) is required as a cofactor. The cofactor is Mn(2+). Ca(2+) serves as cofactor.

The enzyme catalyses ATP-dependent breakage, passage and rejoining of double-stranded DNA.. Topoisomerase IV is essential for chromosome segregation. It relaxes supercoiled DNA. Performs the decatenation events required during the replication of a circular DNA molecule. In Staphylococcus aureus (strain NCTC 8325 / PS 47), this protein is DNA topoisomerase 4 subunit B.